The following is a 267-amino-acid chain: Transmembrane protein 106B (267 aa).

The Cytoplasmic portion of the chain corresponds to Met1–Leu92. Residues Tyr93 to Phe113 form a helical membrane-spanning segment. Topologically, residues Pro114–Gly267 are lumenal. Asn141, Asn147, Asn160, and Asn179 each carry an N-linked (GlcNAc...) asparagine glycan. Cysteines 210 and 249 form a disulfide. N-linked (GlcNAc...) asparagine glycosylation occurs at Asn252.

The protein belongs to the TMEM106 family.

It localises to the late endosome membrane. Its subcellular location is the lysosome membrane. It is found in the cell membrane. In neurons, involved in the transport of late endosomes/lysosomes. May be involved in dendrite morphogenesis and maintenance by regulating lysosomal trafficking. May act as a molecular brake for retrograde transport of late endosomes/lysosomes, possibly via its interaction with MAP6. In motoneurons, may mediate the axonal transport of lysosomes and axonal sorting at the initial segment. It remains unclear whether TMEM106B affects the transport of moving lysosomes in the anterograde or retrograde direction in neurites and whether it is particularly important in the sorting of lysosomes in axons or in dendrites. In neurons, may also play a role in the regulation of lysosomal size and responsiveness to stress. Required for proper lysosomal acidification. This is Transmembrane protein 106B (tmem106b) from Danio rerio (Zebrafish).